The chain runs to 42 residues: Thymosin beta-10 (42 aa).

Composition is skewed to basic and acidic residues over residues 1-25 (MADKPDLGEINSFDKAKLKKTETQE) and 33-42 (ETIEQEKQAK). The segment at 1 to 42 (MADKPDLGEINSFDKAKLKKTETQEKNTLPTKETIEQEKQAK) is disordered. Ala2 carries the N-acetylalanine modification. At Lys4 the chain carries N6-acetyllysine. The residue at position 12 (Ser12) is a Phosphoserine. Lys15 is subject to N6-acetyllysine. Phosphothreonine occurs at positions 21, 23, and 34. An N6-acetyllysine modification is found at Lys39.

This sequence belongs to the thymosin beta family. Distributed in numerous types of tissues, including thymus, spleen, lung, liver and muscle.

It is found in the cytoplasm. The protein localises to the cytoskeleton. Plays an important role in the organization of the cytoskeleton. Binds to and sequesters actin monomers (G actin) and therefore inhibits actin polymerization. The polypeptide is Thymosin beta-10 (TMSB10) (Bos taurus (Bovine)).